Reading from the N-terminus, the 1359-residue chain is DNA-directed RNA polymerase subunit beta (1359 aa).

Belongs to the RNA polymerase beta chain family. The RNAP catalytic core consists of 2 alpha, 1 beta, 1 beta' and 1 omega subunit. When a sigma factor is associated with the core the holoenzyme is formed, which can initiate transcription.

The catalysed reaction is RNA(n) + a ribonucleoside 5'-triphosphate = RNA(n+1) + diphosphate. DNA-dependent RNA polymerase catalyzes the transcription of DNA into RNA using the four ribonucleoside triphosphates as substrates. The polypeptide is DNA-directed RNA polymerase subunit beta (Nitrosococcus oceani (strain ATCC 19707 / BCRC 17464 / JCM 30415 / NCIMB 11848 / C-107)).